We begin with the raw amino-acid sequence, 64 residues long: MSTFIVVFLLLTAILCHAEHAIDETARGCNRLNKKCNSDADCCRYGERCISTGVNYYCRPDFGP.

The first 18 residues, 1-18 (MSTFIVVFLLLTAILCHA), serve as a signal peptide directing secretion. The propeptide occupies 19-27 (EHAIDETAR). 3 disulfides stabilise this stretch: C29–C43, C36–C49, and C42–C58.

This sequence belongs to the scorpion calcin-like family. Expressed by the venom gland.

The protein localises to the secreted. In terms of biological role, voltage-gated potassium channel (Kv) inhibitor. In addition it may increase intracellular calcium release through the activation of nuclear inositol 1,4,5-trisphosphate receptors (ITPR) of cardiomyocytes, thereby causing an increase in the contraction frequency of these cells. The sequence is that of Neurotoxin lambda-MeuTx from Mesobuthus eupeus (Lesser Asian scorpion).